Here is a 713-residue protein sequence, read N- to C-terminus: Glutamine--fructose-6-phosphate aminotransferase [isomerizing] (713 aa).

The active-site For GATase activity is the Cys-2. Residues 2–316 form the Glutamine amidotransferase type-2 domain; that stretch reads CGIFGYVNFL…DDDIAHIYDG (315 aa). SIS domains follow at residues 389-528 and 561-703; these read WLST…DSIS and CNSS…VDFP.

As to quaternary structure, homotetramer.

The enzyme catalyses D-fructose 6-phosphate + L-glutamine = D-glucosamine 6-phosphate + L-glutamate. The protein operates within nucleotide-sugar biosynthesis; UDP-N-acetyl-alpha-D-glucosamine biosynthesis; alpha-D-glucosamine 6-phosphate from D-fructose 6-phosphate: step 1/1. Functionally, involved in amino sugar synthesis (formation of chitin, supplies the amino sugars of asparagine-linked oligosaccharides of glycoproteins). In Candida albicans (strain SC5314 / ATCC MYA-2876) (Yeast), this protein is Glutamine--fructose-6-phosphate aminotransferase [isomerizing] (GFA1).